Here is a 341-residue protein sequence, read N- to C-terminus: MGRILRGLAGEGDLRVVAAETTDVVEEARLRHGLSPTATAALGRAMTGALLLAQLLLKTPKERITLRVEGTGPLGGLVVEADAFGHVRGYVKNPRAEVPLREDGKLNVGELVGAGALRVDRSLPSGEVYTSTVPLVSGEIAEDLAHYLWQSEQIPSAVLLGVRVKGEGEVEVAGGVAVQVMPGAREEVLDRLEANLKDLPGLTPLLRERGLEGALEALLAGLGFERTDLRALGYFQNEIPARFRCRCNREKALEALVFFTPEEREDMIVKDGGAEVVCHWCGEVYRFSPEEVRSLVAEVRCPDCGTLWLYPKGDGTLARIEGETCRCGRKVELPSETRPQA.

Disulfide bonds link Cys-245/Cys-247 and Cys-278/Cys-281.

It belongs to the HSP33 family. Post-translationally, under oxidizing conditions two disulfide bonds are formed involving the reactive cysteines. Under reducing conditions zinc is bound to the reactive cysteines and the protein is inactive.

The protein resides in the cytoplasm. Functionally, redox regulated molecular chaperone. Protects both thermally unfolding and oxidatively damaged proteins from irreversible aggregation. Plays an important role in the bacterial defense system toward oxidative stress. The polypeptide is 33 kDa chaperonin (Thermus thermophilus (strain ATCC 27634 / DSM 579 / HB8)).